A 291-amino-acid chain; its full sequence is Protein ILRUN (291 aa).

The tract at residues 199–291 (NTQPHRKVEG…LHGPYPFGQS (93 aa)) is disordered. The span at 212–228 (PFASPQKNRQSDENNLT) shows a compositional bias: polar residues. Residues serine 215, serine 222, and serine 265 each carry the phosphoserine modification. Over residues 257-276 (LSQSSVNLSPSSPANNLSVV) the composition is skewed to low complexity.

As to quaternary structure, interacts with IRF3; the interaction inhibits IRF3 binding to its DNA consensus sequence.

It is found in the cytoplasm. The protein resides in the nucleus. In terms of biological role, negative regulator of innate antiviral response. Blocks IRF3-dependent cytokine production such as IFNA, IFNB and TNF. Interacts with IRF3 and inhibits IRF3 recruitment to type I IFN promoter sequences while also reducing nuclear levels of the coactivators EP300 and CREBBP. In Mus musculus (Mouse), this protein is Protein ILRUN.